The sequence spans 622 residues: Leucine-rich repeat protein soc-2 homolog (622 aa).

The span at Met1–Ser30 shows a compositional bias: polar residues. A disordered region spans residues Met1 to Thr117. Gly residues-rich tracts occupy residues Phe36–Gly52 and Leu64–Ala75. Polar residues predominate over residues Leu85 to Asn94. 20 LRR repeats span residues Gly142–Cys163, His165–Leu186, Asn188–Cys209, Gln211–Leu232, Ser234–Leu255, Asn257–Leu278, Asn280–Cys301, Asn303–Leu324, Ser326–Lys348, Ser349–Ser370, Ala373–Gln394, Asn397–Arg418, Gly421–Trp442, Asn444–Leu465, Asn467–Leu488, Lys490–Leu511, Glu513–Leu534, Asn536–Leu557, Ser559–Cys581, and Asn583–Gly604.

This sequence belongs to the SHOC2 family.

In terms of biological role, acts as a Ras effector and participates in MAPK pathway activation. Probably acts as a regulatory subunit of protein phosphatase that specifically dephosphorylates Raf kinase and stimulate Raf activity at specialized signaling complexes upon Ras activation. This chain is Leucine-rich repeat protein soc-2 homolog (Sur-8), found in Drosophila grimshawi (Hawaiian fruit fly).